The chain runs to 252 residues: Vacuolar iron transporter 1 (252 aa).

The Cytoplasmic portion of the chain corresponds to 1 to 38 (MAAATDGGGLPLLADKAASHSHHHHPERHFTSGEVVRD). Residues 39–59 (VIMGVSDGLTVPFALAAGLSG) traverse the membrane as a helical segment. Over 60 to 65 (ASAPSS) the chain is Vacuolar. The chain crosses the membrane as a helical span at residues 66-86 (LVLTAGLAEVAAGAISMGLGG). Residues 87 to 170 (YLAAKSEADH…PDPKRAIQSA (84 aa)) are Cytoplasmic-facing. The tract at residues 92-167 (SEADHYQREM…LEKPDPKRAI (76 aa)) is cytoplasmic metal binding domain (MBD). The Fe cation site is built by glutamate 104, glutamate 107, glutamate 115, glutamate 118, methionine 151, and glutamate 155. The helical transmembrane segment at 171–191 (LTIALSYVIGGLVPLLPYMFI) threads the bilayer. Residues 192–196 (STAQN) are Vacuolar-facing. A helical membrane pass occupies residues 197–217 (AMLTSVGVTLVALLFFGYIKG). The Cytoplasmic portion of the chain corresponds to 218 to 224 (RFTGNRP). A helical transmembrane segment spans residues 225-245 (FLSAVQTAIIGALASAAAYGM). The Vacuolar portion of the chain corresponds to 246–252 (AKAVQTR).

It belongs to the CCC1 family. As to quaternary structure, homodimer. The dimeric interaction is mediated by both the transmembrane domains (TMDs) and the cytoplasmic metal binding domain (MBD). In terms of tissue distribution, highly expressed in leaf blades. Expressed in leaf sheaths.

The protein localises to the vacuole membrane. The catalysed reaction is Fe(2+)(in) = Fe(2+)(out). Vacuolar iron transporter involved in the transfer of iron ions from the cytosol to the vacuole for intracellular iron storage. Vacuolar iron storage is required for seed embryo and seedling development. May be involved in the regulation of iron translocation between flag leaves and seeds. Can transport zinc ions from the cytosol to the vacuole. This chain is Vacuolar iron transporter 1, found in Oryza sativa subsp. japonica (Rice).